The primary structure comprises 108 residues: Cuticle protein AM1199 (108 aa).

At glutamine 1 the chain carries Pyrrolidone carboxylic acid. In terms of domain architecture, Chitin-binding type R&amp;R spans 26 to 91 (DGNFGYDFET…AESPLIPTPH (66 aa)). Threonine 89 is a glycosylation site (O-linked (HexNAc) threonine).

As to expression, arthrodial membrane.

The chain is Cuticle protein AM1199 from Cancer pagurus (Rock crab).